Consider the following 498-residue polypeptide: Glycerol kinase (498 aa).

T12 contacts ADP. The ATP site is built by T12, T13, and S14. Position 12 (T12) interacts with sn-glycerol 3-phosphate. Residue R16 participates in ADP binding. Sn-glycerol 3-phosphate is bound by residues R82, E83, Y134, and D244. R82, E83, Y134, D244, and Q245 together coordinate glycerol. ADP contacts are provided by T266 and G310. T266, G310, Q314, and G411 together coordinate ATP. 2 residues coordinate ADP: G411 and N415.

It belongs to the FGGY kinase family.

The enzyme catalyses glycerol + ATP = sn-glycerol 3-phosphate + ADP + H(+). The protein operates within polyol metabolism; glycerol degradation via glycerol kinase pathway; sn-glycerol 3-phosphate from glycerol: step 1/1. With respect to regulation, inhibited by fructose 1,6-bisphosphate (FBP). Functionally, key enzyme in the regulation of glycerol uptake and metabolism. Catalyzes the phosphorylation of glycerol to yield sn-glycerol 3-phosphate. The polypeptide is Glycerol kinase (Azorhizobium caulinodans (strain ATCC 43989 / DSM 5975 / JCM 20966 / LMG 6465 / NBRC 14845 / NCIMB 13405 / ORS 571)).